Reading from the N-terminus, the 454-residue chain is Isthmin-1 (454 aa).

The signal sequence occupies residues 1-29 (MVRLAAELLLLLGLLLLTLHITVLRGSGA). 3 disordered regions span residues 29-93 (ASDR…PRSF), 125-144 (PDSE…WSLP), and 161-209 (TNSG…STDG). Polar residues predominate over residues 38 to 55 (GNNNLNLESDSTSETSFP). Basic and acidic residues predominate over residues 128-137 (EAEKDQHPEN). The region spanning 208-252 (DGEGDWSLWSVCSVTCGNGNQKRTRSCGYACIATESRTCDRPNCP) is the TSP type-1 domain. Intrachain disulfides connect C219–C246, C223–C251, and C234–C238. The AMOP domain occupies 279-442 (LFEVDMDSCE…QKCTESPSDE (164 aa)).

Belongs to the isthmin family. As to quaternary structure, interacts with integrin ITGAV/ITGB5.

The protein localises to the secreted. Its function is as follows. Acts as an angiogenesis inhibitor. The protein is Isthmin-1 (Ism1) of Mus musculus (Mouse).